The primary structure comprises 141 residues: Hemoglobin subunit alpha (141 aa).

The 141-residue stretch at valine 1–arginine 141 folds into the Globin domain. Serine 3 carries the phosphoserine modification. Residue lysine 7 is modified to N6-succinyllysine. The residue at position 8 (threonine 8) is a Phosphothreonine. Position 11 is an N6-succinyllysine (lysine 11). Lysine 16 is subject to N6-acetyllysine; alternate. Lysine 16 carries the N6-succinyllysine; alternate modification. Position 24 is a phosphotyrosine (tyrosine 24). Serine 35 is modified (phosphoserine). N6-succinyllysine is present on lysine 40. Position 49 is a phosphoserine (serine 49). Histidine 58 provides a ligand contact to O2. Heme b is bound at residue histidine 87. Phosphoserine is present on serine 102. A Phosphothreonine modification is found at threonine 108. Serine 124 bears the Phosphoserine mark. Phosphothreonine is present on residues threonine 134 and threonine 137. Phosphoserine is present on serine 138.

Belongs to the globin family. As to quaternary structure, heterotetramer of two alpha chains and two beta chains. In terms of tissue distribution, red blood cells.

Involved in oxygen transport from the lung to the various peripheral tissues. In terms of biological role, hemopressin acts as an antagonist peptide of the cannabinoid receptor CNR1. Hemopressin-binding efficiently blocks cannabinoid receptor CNR1 and subsequent signaling. The chain is Hemoglobin subunit alpha (HBA) from Canis lupus familiaris (Dog).